Here is a 138-residue protein sequence, read N- to C-terminus: Large ribosomal subunit protein uL16 (138 aa).

The span at 1-17 (MLIPRKVKHRKQHHPRQ) shows a compositional bias: basic residues. The disordered stretch occupies residues 1-23 (MLIPRKVKHRKQHHPRQRGIASG).

This sequence belongs to the universal ribosomal protein uL16 family. As to quaternary structure, part of the 50S ribosomal subunit.

Functionally, binds 23S rRNA and is also seen to make contacts with the A and possibly P site tRNAs. The polypeptide is Large ribosomal subunit protein uL16 (Mycobacterium sp. (strain JLS)).